Reading from the N-terminus, the 507-residue chain is MDNTKKYIVSLDSGTTSCRTIIFDQNGNMVSSAQTEFTQYFPQSGWVEHDAIEIWTTQLGTLQSAKSRANIKSHNMAAIGITNQRETVVLWDKETGLPVYNAIVWQDRRTSEYCDELIKQGKANIISSKTGLIINPYFSGTKIRWILKNVPEAAQKLQEHKLLAGTIDTWLIWKLTDGKVHATDVTNASRTMLYNINTLEWDQEILDLLEIPREILPVVKSSSELYGTINPKYLSQRATAAVPIMGVAGDQQSSLFGQLCTEPGMVKNTYGTGCFTLINTGERAIFSKNKLVTTIAWKLGNQKPIYALEGSVFIAGSGIKWLRDSIKVIYNAQECDFYCGLADQEPQNVYMVPSFTGLGAPYWDSSSRGAIFGLERGTKREHIVKATIEAIAFQSNDLLSAMQKDIGKKINIMKVDGGASNSNYLMQFQSSISDVTIMRPTNIETTALGAAYLAGSASGFWKSIDELKKLNPIDKSFRPGLSKEVVNKKLKGWQEAVKRTFNWTNSI.

An ADP-binding site is contributed by threonine 15. The ATP site is built by threonine 15, threonine 16, and serine 17. A sn-glycerol 3-phosphate-binding site is contributed by threonine 15. Arginine 19 serves as a coordination point for ADP. Sn-glycerol 3-phosphate-binding residues include arginine 85, glutamate 86, tyrosine 137, and aspartate 250. 5 residues coordinate glycerol: arginine 85, glutamate 86, tyrosine 137, aspartate 250, and glutamine 251. Residues threonine 272, glycine 316, and glycine 418 each coordinate ADP. Positions 272, 316, and 418 each coordinate ATP.

This sequence belongs to the FGGY kinase family.

It carries out the reaction glycerol + ATP = sn-glycerol 3-phosphate + ADP + H(+). It functions in the pathway polyol metabolism; glycerol degradation via glycerol kinase pathway; sn-glycerol 3-phosphate from glycerol: step 1/1. With respect to regulation, inhibited by fructose 1,6-bisphosphate (FBP). Its function is as follows. Key enzyme in the regulation of glycerol uptake and metabolism. Catalyzes the phosphorylation of glycerol to yield sn-glycerol 3-phosphate. This Malacoplasma penetrans (strain HF-2) (Mycoplasma penetrans) protein is Glycerol kinase.